We begin with the raw amino-acid sequence, 222 residues long: Non-structural protein V (222 aa).

The tract at residues 61-107 (ESTNHQKGSVGGGAKPKKPRPKIAIVPADDKTVPGKPIPNPLLGLDS) is disordered. Positions 171, 190, 194, 206, 208, 211, 215, and 218 each coordinate Zn(2+).

Belongs to the paramyxoviruses V protein family. Interacts with host DDB1, STAT2 and IFIH1/MDA5. Interacts with host RIGI regulatory protein (via CARDs domain) and host TRIM25 (via SPRY domain); these interactions prevent TRIM25-mediated ubiquitination of RIG-I and disrupts downstream RIG-I signaling.

The protein resides in the host cytoplasm. In terms of biological role, plays an essential role in the inhibition of host immune response. Prevents the establishment of cellular antiviral state by blocking interferon-alpha/beta (IFN-alpha/beta) production and signaling pathway. Interacts with host IFIH1/MDA5 and DHX58/LGP2 to inhibit the transduction pathway involved in the activation of IFN-beta promoter, thus protecting the virus against cell antiviral state. Efficiently blocks type I IFN signaling following infection by behaving as a substrate receptor for CUL4-DDB1 E3 ligase complex and targeting host STAT1 for proteasomal degradation. Blocks the type I interferon signaling pathway by disrupting the RIG-I signaling pathway. The protein is Non-structural protein V (P/V) of Parainfluenza virus 5 (strain W3) (PIV5).